The following is a 145-amino-acid chain: uncharacterized protein (145 aa).

The segment at 1–49 (MLSIFKNLLGTSEEDGTTQEANSKDTKGLKEERKRKKRKNKYKIPPGHT) is disordered. Basic and acidic residues predominate over residues 22–32 (NSKDTKGLKEE). Residues 33–42 (RKRKKRKNKY) show a composition bias toward basic residues. Ser-68 carries the phosphoserine modification. Residues 69–145 (PISVTAEELA…LKTSFVGYLV (77 aa)) enclose the Cytochrome b5 heme-binding domain. His-104 and His-127 together coordinate heme.

It belongs to the cytochrome b5 family.

Its subcellular location is the cytoplasm. This is an uncharacterized protein from Schizosaccharomyces pombe (strain 972 / ATCC 24843) (Fission yeast).